The primary structure comprises 512 residues: Ankyrin repeat domain-containing protein SOWAHC (512 aa).

Ser82 and Ser125 each carry phosphoserine. Residues 126-248 form a disordered region; it reads LGLGGEVSDQ…AEEESSVGAS (123 aa). The segment covering 173 to 186 has biased composition (low complexity); sequence PPQGEAEGGSSPSG. Ser205 is modified (phosphoserine). The span at 214–228 shows a compositional bias: gly residues; it reads PGDGNAGGRSRGGGD. The span at 229–248 shows a compositional bias: low complexity; sequence SDTASLASSSAEEESSVGAS. 2 ANK repeats span residues 288–317 and 327–357; these read TGFT…KHQL and GGYT…DVDI. Residue Arg395 is modified to Omega-N-methylarginine. Residues 427–500 are disordered; it reads HVPEGWTGGS…EERSLRGYSS (74 aa). The segment covering 453–462 has biased composition (basic residues); sequence MKPRLNKIRF. Residues 481 to 492 show a composition bias toward acidic residues; that stretch reads EEGEEEEEEEEE.

It belongs to the SOWAH family.

The polypeptide is Ankyrin repeat domain-containing protein SOWAHC (Sowahc) (Mus musculus (Mouse)).